The sequence spans 120 residues: Large ribosomal subunit protein uL18 (120 aa).

Belongs to the universal ribosomal protein uL18 family. Part of the 50S ribosomal subunit; part of the 5S rRNA/L5/L18/L25 subcomplex. Contacts the 5S and 23S rRNAs.

In terms of biological role, this is one of the proteins that bind and probably mediate the attachment of the 5S RNA into the large ribosomal subunit, where it forms part of the central protuberance. The polypeptide is Large ribosomal subunit protein uL18 (Staphylococcus saprophyticus subsp. saprophyticus (strain ATCC 15305 / DSM 20229 / NCIMB 8711 / NCTC 7292 / S-41)).